Reading from the N-terminus, the 96-residue chain is Conantokin-E (96 aa).

A signal peptide spans Leu-1 to Thr-24. Positions Glu-25–Arg-72 are excised as a propeptide. A disordered region spans residues Ser-28–Leu-57. Residues Ser-44–Leu-57 are compositionally biased toward basic and acidic residues. Residues Glu-75, Glu-76, Glu-82, Glu-86, and Glu-95 each carry the 4-carboxyglutamate modification. A divalent metal cation is bound by residues Glu-82 and Glu-86. A disulfide bridge connects residues Cys-83 and Cys-96.

It belongs to the conotoxin B superfamily. As to expression, expressed by the venom duct.

Its subcellular location is the secreted. Conantokins inhibit N-methyl-D-aspartate (NMDA) receptors. This toxin has the highest potency for the NR2B/GRIN2B subunit, followed by NR2A/GRIN2A, NR2C/GRIN2C, and NR2D/GRIN2D subunits. This is Conantokin-E from Conus ermineus (Agate cone).